The chain runs to 253 residues: E3 ubiquitin-protein ligase MARCHF3 (253 aa).

An RING-CH-type zinc finger spans residues 63 to 123 (SPFNDRPMCR…ELCHFRFAVE (61 aa)). Zn(2+)-binding residues include C71, C74, C87, C89, H97, C100, C113, and C116. 2 helical membrane passes run 145–165 (LFGD…SGWL) and 182–202 (AVGL…WTLV). Residues S237 and S243 each carry the phosphoserine modification.

As to quaternary structure, interacts with MARCHF2 and STX6.

It is found in the cytoplasmic vesicle membrane. It localises to the early endosome membrane. The enzyme catalyses S-ubiquitinyl-[E2 ubiquitin-conjugating enzyme]-L-cysteine + [acceptor protein]-L-lysine = [E2 ubiquitin-conjugating enzyme]-L-cysteine + N(6)-ubiquitinyl-[acceptor protein]-L-lysine.. The protein operates within protein modification; protein ubiquitination. Its function is as follows. E3 ubiquitin-protein ligase which may be involved in endosomal trafficking. E3 ubiquitin ligases accept ubiquitin from an E2 ubiquitin-conjugating enzyme in the form of a thioester and then directly transfer the ubiquitin to targeted substrates. The chain is E3 ubiquitin-protein ligase MARCHF3 (MARCHF3) from Bos taurus (Bovine).